The following is a 297-amino-acid chain: 4-hydroxy-tetrahydrodipicolinate synthase (297 aa).

Pyruvate is bound at residue Thr-50. The Proton donor/acceptor role is filled by Tyr-138. The active-site Schiff-base intermediate with substrate is the Lys-166. Ile-208 is a binding site for pyruvate.

Belongs to the DapA family. Homotetramer; dimer of dimers.

The protein localises to the cytoplasm. The enzyme catalyses L-aspartate 4-semialdehyde + pyruvate = (2S,4S)-4-hydroxy-2,3,4,5-tetrahydrodipicolinate + H2O + H(+). Its pathway is amino-acid biosynthesis; L-lysine biosynthesis via DAP pathway; (S)-tetrahydrodipicolinate from L-aspartate: step 3/4. Functionally, catalyzes the condensation of (S)-aspartate-beta-semialdehyde [(S)-ASA] and pyruvate to 4-hydroxy-tetrahydrodipicolinate (HTPA). The polypeptide is 4-hydroxy-tetrahydrodipicolinate synthase (Haemophilus ducreyi (strain 35000HP / ATCC 700724)).